Consider the following 339-residue polypeptide: Dihydroorotate dehydrogenase (quinone) (339 aa).

FMN is bound by residues 62 to 66 (AGMDK) and Thr-86. Lys-66 is a binding site for substrate. 111–115 (NRMGF) provides a ligand contact to substrate. FMN is bound by residues Asn-139 and Asn-172. Asn-172 contributes to the substrate binding site. Ser-175 acts as the Nucleophile in catalysis. Asn-177 lines the substrate pocket. Lys-217 and Thr-245 together coordinate FMN. A substrate-binding site is contributed by 246-247 (NT). FMN contacts are provided by residues Gly-268, Gly-297, and 318–319 (YS).

Belongs to the dihydroorotate dehydrogenase family. Type 2 subfamily. In terms of assembly, monomer. FMN serves as cofactor.

It localises to the cell membrane. It carries out the reaction (S)-dihydroorotate + a quinone = orotate + a quinol. Its pathway is pyrimidine metabolism; UMP biosynthesis via de novo pathway; orotate from (S)-dihydroorotate (quinone route): step 1/1. Catalyzes the conversion of dihydroorotate to orotate with quinone as electron acceptor. In Shewanella baltica (strain OS223), this protein is Dihydroorotate dehydrogenase (quinone).